The primary structure comprises 165 residues: Phosphopantetheine adenylyltransferase (165 aa).

Thr9 is a substrate binding site. ATP is bound by residues 9–10 and His17; that span reads TF. Lys41, Leu73, and Arg87 together coordinate substrate. Residues 88–90, Glu98, and 123–129 each bind ATP; these read GLR and YQFISGT.

The protein belongs to the bacterial CoaD family. As to quaternary structure, homohexamer. Requires Mg(2+) as cofactor.

The protein localises to the cytoplasm. The enzyme catalyses (R)-4'-phosphopantetheine + ATP + H(+) = 3'-dephospho-CoA + diphosphate. The protein operates within cofactor biosynthesis; coenzyme A biosynthesis; CoA from (R)-pantothenate: step 4/5. Functionally, reversibly transfers an adenylyl group from ATP to 4'-phosphopantetheine, yielding dephospho-CoA (dPCoA) and pyrophosphate. The polypeptide is Phosphopantetheine adenylyltransferase (Burkholderia orbicola (strain MC0-3)).